We begin with the raw amino-acid sequence, 161 residues long: RNA pyrophosphohydrolase (161 aa).

The Nudix hydrolase domain occupies 9–155 (PYRPCVGVML…KRRVYRQVVD (147 aa)). Residues 44–65 (GGIDDGEELHPAALRELSEETG) carry the Nudix box motif.

It belongs to the Nudix hydrolase family. RppH subfamily. Requires a divalent metal cation as cofactor.

Functionally, accelerates the degradation of transcripts by removing pyrophosphate from the 5'-end of triphosphorylated RNA, leading to a more labile monophosphorylated state that can stimulate subsequent ribonuclease cleavage. The protein is RNA pyrophosphohydrolase of Novosphingobium aromaticivorans (strain ATCC 700278 / DSM 12444 / CCUG 56034 / CIP 105152 / NBRC 16084 / F199).